Reading from the N-terminus, the 512-residue chain is Replication initiation protein (512 aa).

Its function is as follows. Essential for replication. Binds specifically to a 60-bp region corresponding to the putative origin of replication of pXO2. Also binds nonspecifically to single-stranded DNA with lower affinity. The polypeptide is Replication initiation protein (repS) (Bacillus anthracis).